Here is a 191-residue protein sequence, read N- to C-terminus: Protein 2 in picA locus (191 aa).

The protein belongs to the acyltransferase 3 family.

The protein resides in the cell membrane. In terms of biological role, seems to regulate the surface properties of the bacterium in the presence of plant cells or plant cell extracts. This is Protein 2 in picA locus from Rhizobium radiobacter (Agrobacterium tumefaciens).